The following is a 230-amino-acid chain: Urease accessory protein UreF (230 aa).

The protein belongs to the UreF family. UreD, UreF and UreG form a complex that acts as a GTP-hydrolysis-dependent molecular chaperone, activating the urease apoprotein by helping to assemble the nickel containing metallocenter of UreC. The UreE protein probably delivers the nickel.

It localises to the cytoplasm. Required for maturation of urease via the functional incorporation of the urease nickel metallocenter. The chain is Urease accessory protein UreF from Cupriavidus necator (strain ATCC 17699 / DSM 428 / KCTC 22496 / NCIMB 10442 / H16 / Stanier 337) (Ralstonia eutropha).